We begin with the raw amino-acid sequence, 86 residues long: Progonadoliberin-2 (86 aa).

Positions 1-24 (MVHICRLLVLMGMLLCLSAQFASS) are cleaved as a signal peptide. Residue Q25 is modified to Pyrrolidone carboxylic acid. G34 is subject to Glycine amide.

This sequence belongs to the GnRH family.

It is found in the secreted. In terms of biological role, stimulates the secretion of gonadotropins. This chain is Progonadoliberin-2 (gnrh2), found in Rutilus rutilus (Roach).